Here is a 461-residue protein sequence, read N- to C-terminus: D-phenylhydantoinase (461 aa).

A divalent metal cation contacts are provided by His59, His61, and Lys151. Lys151 is modified (N6-carboxylysine). Residue Tyr156 participates in substrate binding. 2 residues coordinate a divalent metal cation: His182 and His239. Ser286 provides a ligand contact to substrate. An a divalent metal cation-binding site is contributed by Asp313. Residue Asn335 coordinates substrate.

The protein belongs to the metallo-dependent hydrolases superfamily. Hydantoinase/dihydropyrimidinase family. In terms of assembly, homotetramer. It depends on a divalent metal cation as a cofactor. Carboxylation allows a single lysine to coordinate two divalent metal cations.

The enzyme catalyses D-5-phenylhydantoin + H2O = N-carbamoyl-D-phenylglycine + H(+). Its function is as follows. Catalyzes the stereospecific hydrolysis of the cyclic amide bond of D-hydantoin derivatives with an aromatic side chains at the 5'-position. Has no activity on dihydropyrimidines. The physiological function is unknown. This chain is D-phenylhydantoinase, found in Escherichia coli O81 (strain ED1a).